A 99-amino-acid polypeptide reads, in one-letter code: Large ribosomal subunit protein eL21 (99 aa).

This sequence belongs to the eukaryotic ribosomal protein eL21 family.

The polypeptide is Large ribosomal subunit protein eL21 (Staphylothermus marinus (strain ATCC 43588 / DSM 3639 / JCM 9404 / F1)).